Consider the following 841-residue polypeptide: Protein translocase subunit SecA (841 aa).

ATP-binding positions include Met-79–Phe-80, Gln-85, Gly-103–Thr-107, and Asp-492. The tract at residues Arg-786–Val-813 is disordered. Zn(2+) is bound by residues Cys-825, Cys-827, Cys-836, and Cys-837.

This sequence belongs to the SecA family. Part of the essential Sec protein translocation apparatus which comprises SecA, SecYEG and auxiliary proteins SecDF. Other proteins may be involved. Monomer and many different homodimers can be isolated, some of which are not formed in the presence of a synthetic signal peptide. A single SecA monomer interacts with SecY in the channel. Only shows some colocalization with FloA or FloT membrane assemblies. Requires Zn(2+) as cofactor.

Its subcellular location is the cell membrane. The protein localises to the cytoplasm. It localises to the membrane raft. It catalyses the reaction ATP + H2O + cellular proteinSide 1 = ADP + phosphate + cellular proteinSide 2.. Functionally, part of the Sec protein translocase complex. Interacts with the SecYEG preprotein conducting channel. Has a central role in coupling the hydrolysis of ATP to the transfer of proteins into and across the cell membrane, serving as an ATP-driven molecular motor driving the stepwise translocation of polypeptide chains across the membrane. This is Protein translocase subunit SecA from Bacillus subtilis (strain 168).